The primary structure comprises 158 residues: Placenta growth factor (158 aa).

Positions methionine 1–alanine 18 are cleaved as a signal peptide. N-linked (GlcNAc...) asparagine glycans are attached at residues asparagine 29 and asparagine 30. Intrachain disulfides connect cysteine 48–cysteine 90, cysteine 79–cysteine 125, and cysteine 83–cysteine 127. An N-linked (GlcNAc...) asparagine glycan is attached at asparagine 97. The segment at alanine 136–proline 158 is disordered. Basic residues predominate over residues glutamate 137–arginine 149.

This sequence belongs to the PDGF/VEGF growth factor family. In terms of assembly, antiparallel homodimer; disulfide-linked. Also found as heterodimer with VEGFA/VEGF.

The protein resides in the secreted. Functionally, growth factor active in angiogenesis and endothelial cell growth, stimulating their proliferation and migration. It binds to the receptor FLT1/VEGFR-1. Also promotes cell tumor growth. The sequence is that of Placenta growth factor (Pgf) from Mus musculus (Mouse).